The chain runs to 288 residues: UTP--glucose-1-phosphate uridylyltransferase (288 aa).

The protein belongs to the UDPGP type 2 family.

It carries out the reaction alpha-D-glucose 1-phosphate + UTP + H(+) = UDP-alpha-D-glucose + diphosphate. The protein operates within glycolipid metabolism; diglucosyl-diacylglycerol biosynthesis. Catalyzes the formation of UDP-glucose from glucose-1-phosphate and UTP. This is an intermediate step in the biosynthesis of diglucosyl-diacylglycerol (Glc2-DAG), i.e. the predominant glycolipid found in the S.aureus membrane, which is also used as a membrane anchor for lipoteichoic acid (LTA). This chain is UTP--glucose-1-phosphate uridylyltransferase (gtaB), found in Staphylococcus aureus (strain MRSA252).